A 330-amino-acid chain; its full sequence is uncharacterized protein (330 aa).

Residues 4–242 (LTISDLVVEY…AGEVLFEQST (239 aa)) enclose the ABC transporter domain. 40 to 47 (GPSGCGKT) contacts ATP. Residue 210-330 (DRVLELMPAQ…LIEHRELASE (121 aa)) coordinates a nucleoside 3',5'-cyclic phosphate.

The protein belongs to the ABC transporter superfamily.

This is an uncharacterized protein from Mycobacterium bovis (strain ATCC BAA-935 / AF2122/97).